A 540-amino-acid chain; its full sequence is Membrane protein insertase YidC (540 aa).

The chain crosses the membrane as a helical span at residues 6–26 (NILLIALALVSFLLFQQWQVA). Residues 36 to 63 (QAQSSSTLPAPSFADELDPVPGQQQASA) form a disordered region. 4 consecutive transmembrane segments (helical) span residues 342 to 362 (AFIQ…TFIV), 417 to 437 (LGGC…YWAL), 455 to 475 (LSAQ…MFLI), and 496 to 516 (PVMF…YWLV).

It belongs to the OXA1/ALB3/YidC family. Type 1 subfamily. As to quaternary structure, interacts with the Sec translocase complex via SecD. Specifically interacts with transmembrane segments of nascent integral membrane proteins during membrane integration.

The protein localises to the cell inner membrane. Functionally, required for the insertion and/or proper folding and/or complex formation of integral membrane proteins into the membrane. Involved in integration of membrane proteins that insert both dependently and independently of the Sec translocase complex, as well as at least some lipoproteins. Aids folding of multispanning membrane proteins. The sequence is that of Membrane protein insertase YidC from Vibrio campbellii (strain ATCC BAA-1116).